The following is a 296-amino-acid chain: Glycine--tRNA ligase alpha subunit (296 aa).

Belongs to the class-II aminoacyl-tRNA synthetase family. Tetramer of two alpha and two beta subunits.

The protein resides in the cytoplasm. The catalysed reaction is tRNA(Gly) + glycine + ATP = glycyl-tRNA(Gly) + AMP + diphosphate. This chain is Glycine--tRNA ligase alpha subunit, found in Exiguobacterium sibiricum (strain DSM 17290 / CCUG 55495 / CIP 109462 / JCM 13490 / 255-15).